A 109-amino-acid chain; its full sequence is uncharacterized protein (109 aa).

In terms of domain architecture, HTH cro/C1-type spans 42 to 100 (LEEKLKQEKIDRKYLAEVTNIPYTTVSRIMRAEANREFNPEIDTILKIAKYFNCTMDEV). Positions 53–72 (RKYLAEVTNIPYTTVSRIMR) form a DNA-binding region, H-T-H motif.

This is an uncharacterized protein from Rickettsia conorii (strain ATCC VR-613 / Malish 7).